The following is a 414-amino-acid chain: Enterobactin exporter EntS (414 aa).

At 1–21 the chain is on the cytoplasmic side; that stretch reads MNRQSWLLNLSLLKTHPAFRA. A helical membrane pass occupies residues 22–42; it reads VFLARFISIVSLGLLGVAVPV. Residues 43–55 are Periplasmic-facing; it reads QIQMMTHSTWQVG. Residues 56–76 traverse the membrane as a helical segment; the sequence is LSVTLTGGAMFIGLMVGGVLA. Residues 77–83 are Cytoplasmic-facing; it reads DRYERKK. The chain crosses the membrane as a helical span at residues 84 to 104; the sequence is VILLARGTCGIGFIGLCVNAL. Residues 105–109 lie on the Periplasmic side of the membrane; that stretch reads LPEPS. The helical transmembrane segment at 110–130 threads the bilayer; sequence LLAIYLLGLWDGFFASLGVTA. Residues 131–156 are Cytoplasmic-facing; sequence LLAATPALVGRENLMQAGAITMLTVR. The helical transmembrane segment at 157 to 177 threads the bilayer; it reads LGSVISPMLGGILLASGGVAW. A topological domain (periplasmic) is located at residue Asn178. The helical transmembrane segment at 179-199 threads the bilayer; the sequence is YGLAAAGTFITLLPLLTLPRL. Residues 200-218 lie on the Cytoplasmic side of the membrane; sequence PVPPQPRENPFLALLAAFR. The helical transmembrane segment at 219–239 threads the bilayer; it reads FLLACPLIGGIALLGGLVTMA. At 240 to 256 the chain is on the periplasmic side; the sequence is SAVRVLYPALAMSWQMS. A helical membrane pass occupies residues 257–277; sequence AAQIGLLYAAIPLGAAIGALT. Residues 278–287 are Cytoplasmic-facing; that stretch reads SGQLAHSVRP. A helical membrane pass occupies residues 288–307; that stretch reads GLIMLVSTVGSFLAVGLFAI. The Periplasmic portion of the chain corresponds to 308 to 313; that stretch reads MPVWIA. A helical membrane pass occupies residues 314–336; sequence GVICLALFGWLSAISSLLQYTLL. Residues 337-356 are Cytoplasmic-facing; sequence QTQTPENMLGRMNGLWTAQN. Residues 357–377 traverse the membrane as a helical segment; it reads VTGDAIGAALLGGLGAMMTPV. A topological domain (periplasmic) is located at residue Ala378. Residues 379–399 traverse the membrane as a helical segment; it reads SASVSGFGLVIIGLLLLLVLG. Residues 400–414 are Cytoplasmic-facing; it reads ELRRFRQTSPVSDAG.

It belongs to the major facilitator superfamily. EntS (TC 2.A.1.38) family.

It localises to the cell inner membrane. In terms of biological role, component of an export pathway for enterobactin. The protein is Enterobactin exporter EntS of Salmonella paratyphi A (strain ATCC 9150 / SARB42).